The primary structure comprises 254 residues: tRNA (guanine-N(1)-)-methyltransferase (254 aa).

Residues Gly121 and 141–146 (LGDYVL) contribute to the S-adenosyl-L-methionine site.

Belongs to the RNA methyltransferase TrmD family. In terms of assembly, homodimer.

It localises to the cytoplasm. It carries out the reaction guanosine(37) in tRNA + S-adenosyl-L-methionine = N(1)-methylguanosine(37) in tRNA + S-adenosyl-L-homocysteine + H(+). Specifically methylates guanosine-37 in various tRNAs. The polypeptide is tRNA (guanine-N(1)-)-methyltransferase (Psychrobacter cryohalolentis (strain ATCC BAA-1226 / DSM 17306 / VKM B-2378 / K5)).